Reading from the N-terminus, the 485-residue chain is Glutamyl-tRNA(Gln) amidotransferase subunit A (485 aa).

Catalysis depends on charge relay system residues K79 and S154. The Acyl-ester intermediate role is filled by S178.

It belongs to the amidase family. GatA subfamily. As to quaternary structure, heterotrimer of A, B and C subunits.

The catalysed reaction is L-glutamyl-tRNA(Gln) + L-glutamine + ATP + H2O = L-glutaminyl-tRNA(Gln) + L-glutamate + ADP + phosphate + H(+). Allows the formation of correctly charged Gln-tRNA(Gln) through the transamidation of misacylated Glu-tRNA(Gln) in organisms which lack glutaminyl-tRNA synthetase. The reaction takes place in the presence of glutamine and ATP through an activated gamma-phospho-Glu-tRNA(Gln). In Staphylococcus epidermidis (strain ATCC 12228 / FDA PCI 1200), this protein is Glutamyl-tRNA(Gln) amidotransferase subunit A.